The following is a 307-amino-acid chain: Nitric oxide synthase-interacting protein homolog (307 aa).

The disordered stretch occupies residues 120–159; the sequence is PAMTPAHSSAAASEKPSTSSAAAAASSESSSASSISNMTN. Residues 127-155 are compositionally biased toward low complexity; the sequence is SSAAASEKPSTSSAAAAASSESSSASSIS.

It belongs to the NOSIP family.

It is found in the cytoplasm. The protein resides in the nucleus. Its function is as follows. Negatively regulates nitric oxide production by inducing nitric oxide synthase translocation to actin cytoskeleton and inhibiting its enzymatic activity. The sequence is that of Nitric oxide synthase-interacting protein homolog from Drosophila melanogaster (Fruit fly).